The sequence spans 119 residues: uncharacterized protein (119 aa).

The helical transmembrane segment at 30-50 threads the bilayer; that stretch reads LMTLPCVLFLSSFGQAVIVVL.

It localises to the membrane. This is an uncharacterized protein from Saccharomyces cerevisiae (strain ATCC 204508 / S288c) (Baker's yeast).